We begin with the raw amino-acid sequence, 365 residues long: Glutamate 5-kinase 1 (365 aa).

Residue lysine 9 coordinates ATP. 3 residues coordinate substrate: serine 49, aspartate 136, and asparagine 148. ATP is bound by residues 168–169 (TD) and 210–216 (TGGMKSK). One can recognise a PUA domain in the interval 276–353 (SGEIIIDAGA…DELDFEKTFE (78 aa)).

It belongs to the glutamate 5-kinase family.

Its subcellular location is the cytoplasm. The enzyme catalyses L-glutamate + ATP = L-glutamyl 5-phosphate + ADP. Its pathway is amino-acid biosynthesis; L-proline biosynthesis; L-glutamate 5-semialdehyde from L-glutamate: step 1/2. In terms of biological role, catalyzes the transfer of a phosphate group to glutamate to form L-glutamate 5-phosphate. This chain is Glutamate 5-kinase 1, found in Bacillus subtilis (strain 168).